We begin with the raw amino-acid sequence, 352 residues long: PhoH-like protein (352 aa).

The segment at 1-21 (MTSRETRAADAAGARQADAQV) is disordered. The span at 9 to 20 (ADAAGARQADAQ) shows a compositional bias: low complexity. Position 150-157 (150-157 (GPAGTGKT)) interacts with ATP.

It belongs to the PhoH family.

Its subcellular location is the cytoplasm. In Mycobacterium bovis (strain ATCC BAA-935 / AF2122/97), this protein is PhoH-like protein.